The sequence spans 69 residues: uncharacterized protein (69 aa).

It localises to the mitochondrion. This is an uncharacterized protein from Marchantia polymorpha (Common liverwort).